The chain runs to 588 residues: Calicin (588 aa).

The region spanning 28-98 (WDIALTVDHH…FYSGKVVISE (71 aa)) is the BTB domain. Phosphoserine is present on S149. 6 Kelch repeats span residues 280–327 (SVVI…SAGR), 328–375 (YIYI…TCGG), 377–423 (VYSV…TRGD), 425–475 (NLYI…SFHQ), 476–525 (DNIL…VGDN), and 526–580 (KVFV…LAKL).

In terms of assembly, interacts with CYLC1; the interaction may be relevant for proper acrosome attachment to the nuclear envelope. Expressed in testis and in spermatozoa (at protein level).

The protein resides in the cytoplasm. Its subcellular location is the cytoskeleton. It localises to the perinuclear theca. The protein localises to the calyx. Required for both nuclear and acrosomal shaping during spermiogenesis. The protein is Calicin (CCIN) of Bos taurus (Bovine).